A 572-amino-acid polypeptide reads, in one-letter code: Proline--tRNA ligase (572 aa).

This sequence belongs to the class-II aminoacyl-tRNA synthetase family. ProS type 1 subfamily. As to quaternary structure, homodimer.

The protein resides in the cytoplasm. It carries out the reaction tRNA(Pro) + L-proline + ATP = L-prolyl-tRNA(Pro) + AMP + diphosphate. Catalyzes the attachment of proline to tRNA(Pro) in a two-step reaction: proline is first activated by ATP to form Pro-AMP and then transferred to the acceptor end of tRNA(Pro). As ProRS can inadvertently accommodate and process non-cognate amino acids such as alanine and cysteine, to avoid such errors it has two additional distinct editing activities against alanine. One activity is designated as 'pretransfer' editing and involves the tRNA(Pro)-independent hydrolysis of activated Ala-AMP. The other activity is designated 'posttransfer' editing and involves deacylation of mischarged Ala-tRNA(Pro). The misacylated Cys-tRNA(Pro) is not edited by ProRS. The chain is Proline--tRNA ligase from Erwinia tasmaniensis (strain DSM 17950 / CFBP 7177 / CIP 109463 / NCPPB 4357 / Et1/99).